Reading from the N-terminus, the 423-residue chain is MFDKNMTIAGYDDALADAMNAEAQRQEDHIELIASENYTSPRVMEAQGSVLTNKYAEGYPNKRYYGGCEHVDVVEQLAIDRAKELFGADYANVQPHSGSQANAPVYMALLEPGDTVLGMSLAHGGHLTHGSHVSFSGKMYNAVQYGLNPETGVIDYDEVERLAKEHKPKMIIAGFSAYSQVVDWQKFREIADAVGAYLMVDMAHVAGLVAAGEYPNPVQIADVTTTTTHKTLRGPRSGLILAKSNPEIEKKLNSAIFPGAQGGPLMHVIAAKAVAFKEAMEPEFKTYAKQVKVNAKAMADVFMARGFDVVSKGTENHLFLVSFIEQGLTGKLVDAALGEAHITINKNSVPNDPMSPFVTSGIRVGTAASTTRGFTEEDSKNLASWMCDVIDSCQQASESWDEKVVADVREKVKALCAARPVYK.

Residues L121 and 125-127 each bind (6S)-5,6,7,8-tetrahydrofolate; that span reads GHL. K230 bears the N6-(pyridoxal phosphate)lysine mark. 355-357 serves as a coordination point for (6S)-5,6,7,8-tetrahydrofolate; the sequence is SPF.

This sequence belongs to the SHMT family. As to quaternary structure, homodimer. Requires pyridoxal 5'-phosphate as cofactor.

It localises to the cytoplasm. It carries out the reaction (6R)-5,10-methylene-5,6,7,8-tetrahydrofolate + glycine + H2O = (6S)-5,6,7,8-tetrahydrofolate + L-serine. Its pathway is one-carbon metabolism; tetrahydrofolate interconversion. It functions in the pathway amino-acid biosynthesis; glycine biosynthesis; glycine from L-serine: step 1/1. Catalyzes the reversible interconversion of serine and glycine with tetrahydrofolate (THF) serving as the one-carbon carrier. This reaction serves as the major source of one-carbon groups required for the biosynthesis of purines, thymidylate, methionine, and other important biomolecules. Also exhibits THF-independent aldolase activity toward beta-hydroxyamino acids, producing glycine and aldehydes, via a retro-aldol mechanism. The chain is Serine hydroxymethyltransferase from Hydrogenovibrio crunogenus (strain DSM 25203 / XCL-2) (Thiomicrospira crunogena).